A 266-amino-acid chain; its full sequence is Putative carbamate hydrolase RutD (266 aa).

Residues 14–115 (PVVVLISGLG…TVLISVNGWL (102 aa)) form the AB hydrolase-1 domain.

The protein belongs to the AB hydrolase superfamily. Hydrolase RutD family.

The enzyme catalyses carbamate + 2 H(+) = NH4(+) + CO2. Its function is as follows. Involved in pyrimidine catabolism. May facilitate the hydrolysis of carbamate, a reaction that can also occur spontaneously. The polypeptide is Putative carbamate hydrolase RutD (Shigella sonnei (strain Ss046)).